Reading from the N-terminus, the 260-residue chain is NADH-ubiquinone oxidoreductase chain 6 (260 aa).

6 helical membrane passes run 2–22 (LTNY…FMII), 30–50 (SILY…ILGV), 52–72 (FIAI…FLFV), 101–121 (FLFQ…FGLF), 142–162 (VPSG…NLGI), and 211–231 (FFIF…SIIL).

This sequence belongs to the complex I subunit 6 family.

It is found in the mitochondrion membrane. It carries out the reaction a ubiquinone + NADH + 5 H(+)(in) = a ubiquinol + NAD(+) + 4 H(+)(out). Core subunit of the mitochondrial membrane respiratory chain NADH dehydrogenase (Complex I) that is believed to belong to the minimal assembly required for catalysis. Complex I functions in the transfer of electrons from NADH to the respiratory chain. The immediate electron acceptor for the enzyme is believed to be ubiquinone. This Acanthamoeba castellanii (Amoeba) protein is NADH-ubiquinone oxidoreductase chain 6 (ND6).